A 520-amino-acid polypeptide reads, in one-letter code: Laccase-4 (520 aa).

Positions 1 to 18 (MGRFSSLCALTAVIHSFG) are cleaved as a signal peptide. Plastocyanin-like domains follow at residues 24–149 (IGPV…MVVY), 161–303 (VDDE…ILRY), and 370–491 (TVPV…FSED). N-linked (GlcNAc...) asparagine glycosylation is found at asparagine 73 and asparagine 76. Residues histidine 86, histidine 88, histidine 131, and histidine 133 each coordinate Cu cation. Disulfide bonds link cysteine 107/cysteine 509 and cysteine 139/cysteine 227. Asparagine 239 and asparagine 399 each carry an N-linked (GlcNAc...) asparagine glycan. Cu cation is bound by residues histidine 418, histidine 421, histidine 423, histidine 473, cysteine 474, histidine 475, and histidine 479. Asparagine 497 carries an N-linked (GlcNAc...) asparagine glycan.

It belongs to the multicopper oxidase family. Homodimer. The cofactor is Cu cation.

It is found in the secreted. It carries out the reaction 4 hydroquinone + O2 = 4 benzosemiquinone + 2 H2O. Lignin degradation and detoxification of lignin-derived products. In Trametes villosa (White-rot fungus), this protein is Laccase-4 (LCC4).